Reading from the N-terminus, the 141-residue chain is Large ribosomal subunit protein uL22c (141 aa).

This sequence belongs to the universal ribosomal protein uL22 family. Part of the 50S ribosomal subunit.

It is found in the plastid. The protein localises to the chloroplast. This protein binds specifically to 23S rRNA. Functionally, the globular domain of the protein is located near the polypeptide exit tunnel on the outside of the subunit, while an extended beta-hairpin is found that lines the wall of the exit tunnel in the center of the 70S ribosome. This is Large ribosomal subunit protein uL22c (rpl22) from Chloranthus spicatus (Chulantree).